The sequence spans 317 residues: Melanocyte-stimulating hormone receptor (317 aa).

Topologically, residues 1–37 (MPVQGSQRRLLGSLNSTPTATPHLGLAANQTGARCLE) are extracellular. N29 carries N-linked (GlcNAc...) asparagine glycosylation. A helical transmembrane segment spans residues 38–63 (VSVPDGLFLSLGLVSLVENVLVVTAI). The Cytoplasmic portion of the chain corresponds to 64–72 (AKNRNLHSP). A helical transmembrane segment spans residues 73-93 (MYCFICCLALSDLLVSGSNML). At 94–118 (ETAVTLLLEAGVLAARAAVVQQLDN) the chain is on the extracellular side. Residues 119 to 140 (VIDVITCSSMLSSLCFLGAIAV) traverse the membrane as a helical segment. Topologically, residues 141–163 (DRYISIFYALRYHSIVTLPRARR) are cytoplasmic. Residues 164-183 (AVAAIWVASVLFSTLFIAYY) traverse the membrane as a helical segment. Over 184–191 (DHAAVLLC) the chain is Extracellular. The helical transmembrane segment at 192-211 (LVIFFLAMLVLMAVLYVHML) threads the bilayer. The Cytoplasmic segment spans residues 212–240 (ARACQHAQGIARLHKRQRLAHQGFGLKGA). A helical membrane pass occupies residues 241-266 (ATLTILLGIFFLCWGPFFLHLTLIVL). Over 267 to 279 (CPQHPTCSCIFKN) the chain is Extracellular. The chain crosses the membrane as a helical span at residues 280-300 (FNLFLALIICNAIIDPLIYAF). At 301–317 (RSQELRRTLKEVLLCSW) the chain is on the cytoplasmic side. C315 is lipidated: S-palmitoyl cysteine.

Belongs to the G-protein coupled receptor 1 family. In terms of assembly, interacts with MGRN1, but does not undergo MGRN1-mediated ubiquitination; this interaction competes with GNAS-binding and thus inhibits agonist-induced cAMP production. Interacts with OPN3; the interaction results in a decrease in MC1R-mediated cAMP signaling and ultimately a decrease in melanin production in melanocytes.

It localises to the cell membrane. Its function is as follows. Receptor for MSH (alpha, beta and gamma) and ACTH. The activity of this receptor is mediated by G proteins which activate adenylate cyclase. Mediates melanogenesis, the production of eumelanin (black/brown) and phaeomelanin (red/yellow), via regulation of cAMP signaling in melanocytes. The protein is Melanocyte-stimulating hormone receptor (MC1R) of Papio anubis (Olive baboon).